The following is a 132-amino-acid chain: Sec-independent protein translocase protein TatB (132 aa).

The chain crosses the membrane as a helical span at residues 2-22 (FDGIGFMELLLIGILGLVVLG). Positions 68-132 (ENQGLKDLSP…VSANPDKSNR (65 aa)) are disordered. The segment covering 102–122 (TPSASSSAPSESTPSEAPTAE) has biased composition (low complexity).

The protein belongs to the TatB family. As to quaternary structure, the Tat system comprises two distinct complexes: a TatABC complex, containing multiple copies of TatA, TatB and TatC subunits, and a separate TatA complex, containing only TatA subunits. Substrates initially bind to the TatABC complex, which probably triggers association of the separate TatA complex to form the active translocon.

It is found in the cell inner membrane. Its function is as follows. Part of the twin-arginine translocation (Tat) system that transports large folded proteins containing a characteristic twin-arginine motif in their signal peptide across membranes. Together with TatC, TatB is part of a receptor directly interacting with Tat signal peptides. TatB may form an oligomeric binding site that transiently accommodates folded Tat precursor proteins before their translocation. In Shewanella woodyi (strain ATCC 51908 / MS32), this protein is Sec-independent protein translocase protein TatB.